The following is a 280-amino-acid chain: Protein FLOURY 1-like (280 aa).

A helical membrane pass occupies residues 22-42 (GFGFGIFVIGCSSQFFNLVFL). Residues 153-187 (VALSETELDEKNHHGEEEESEDEEESQSQNDEDQL) are disordered. Positions 169–187 (EEESEDEEESQSQNDEDQL) are enriched in acidic residues. Residues 188–280 (LDVITLRTMV…LDDDEDKIQM (93 aa)) enclose the GTD-binding domain.

It is found in the membrane. The chain is Protein FLOURY 1-like from Arabidopsis thaliana (Mouse-ear cress).